A 443-amino-acid polypeptide reads, in one-letter code: DNA double-strand break repair protein Mre11 (443 aa).

The Mn(2+) site is built by Asp-8, His-10, Asp-49, and Asn-84. Residue His-85 is the Proton donor of the active site. Positions 169, 201, and 203 each coordinate Mn(2+). The tract at residues 382–429 (QEEGAEERVVEEETEKKVEEQFKGDEEADEAERRAEETEKAKSTKKAR) is disordered. Basic and acidic residues predominate over residues 395 to 423 (TEKKVEEQFKGDEEADEAERRAEETEKAK).

The protein belongs to the MRE11/RAD32 family. In terms of assembly, homodimer. Forms a heterotetramer composed of two Mre11 subunits and two Rad50 subunits. Requires Mn(2+) as cofactor.

Nuclease activity is regulated by Rad50. Part of the Rad50/Mre11 complex, which is involved in the early steps of DNA double-strand break (DSB) repair. The complex may facilitate opening of the processed DNA ends to aid in the recruitment of HerA and NurA. Mre11 binds to DSB ends and has both double-stranded 3'-5' exonuclease activity and single-stranded endonuclease activity. The protein is DNA double-strand break repair protein Mre11 of Archaeoglobus fulgidus (strain ATCC 49558 / DSM 4304 / JCM 9628 / NBRC 100126 / VC-16).